The sequence spans 90 residues: RNA-binding protein Hfq (90 aa).

The region spanning 9–68 (EPFLNTLRKEKVPVSIYLVNGIKLQGQIESFDQFVVLLRNNVNQMVYKHAISTIVPARRV) is the Sm domain.

This sequence belongs to the Hfq family. In terms of assembly, homohexamer.

Functionally, RNA chaperone that binds small regulatory RNA (sRNAs) and mRNAs to facilitate mRNA translational regulation in response to envelope stress, environmental stress and changes in metabolite concentrations. Also binds with high specificity to tRNAs. The chain is RNA-binding protein Hfq from Halorhodospira halophila (strain DSM 244 / SL1) (Ectothiorhodospira halophila (strain DSM 244 / SL1)).